The primary structure comprises 169 residues: Ribosome maturation factor RimM (169 aa).

The PRC barrel domain occupies 92–167 (PKDTYFICDI…YMKIKVVEGL (76 aa)).

The protein belongs to the RimM family. Binds ribosomal protein uS19.

Its subcellular location is the cytoplasm. An accessory protein needed during the final step in the assembly of 30S ribosomal subunit, possibly for assembly of the head region. Essential for efficient processing of 16S rRNA. May be needed both before and after RbfA during the maturation of 16S rRNA. It has affinity for free ribosomal 30S subunits but not for 70S ribosomes. The sequence is that of Ribosome maturation factor RimM from Caldicellulosiruptor bescii (strain ATCC BAA-1888 / DSM 6725 / KCTC 15123 / Z-1320) (Anaerocellum thermophilum).